Here is a 283-residue protein sequence, read N- to C-terminus: Phosphate import ATP-binding protein PstB (283 aa).

A compositionally biased stretch (polar residues) spans 1–20 (MAQTLAQTKQISQSHTFDVS). The tract at residues 1-32 (MAQTLAQTKQISQSHTFDVSQSHHKTPDDTNS) is disordered. An ABC transporter domain is found at 37-278 (YSTQNLDLWY…PSNKKTEDYI (242 aa)). 69–76 (GPSGCGKS) is an ATP binding site.

The protein belongs to the ABC transporter superfamily. Phosphate importer (TC 3.A.1.7) family. The complex is composed of two ATP-binding proteins (PstB), two transmembrane proteins (PstC and PstA) and a solute-binding protein (PstS).

It localises to the cell membrane. It catalyses the reaction phosphate(out) + ATP + H2O = ADP + 2 phosphate(in) + H(+). Its function is as follows. Part of the ABC transporter complex PstSACB involved in phosphate import. Responsible for energy coupling to the transport system. This Staphylococcus aureus (strain MRSA252) protein is Phosphate import ATP-binding protein PstB.